The chain runs to 294 residues: Tryptophan 2,3-dioxygenase (294 aa).

Positions M1–A20 are disordered. Substrate contacts are provided by residues F63–H67, Y125, and R129. Heme is bound at residue H252. T266 contacts substrate.

It belongs to the tryptophan 2,3-dioxygenase family. In terms of assembly, homotetramer. It depends on heme as a cofactor.

It carries out the reaction L-tryptophan + O2 = N-formyl-L-kynurenine. It functions in the pathway amino-acid degradation; L-tryptophan degradation via kynurenine pathway; L-kynurenine from L-tryptophan: step 1/2. Heme-dependent dioxygenase that catalyzes the oxidative cleavage of the L-tryptophan (L-Trp) pyrrole ring and converts L-tryptophan to N-formyl-L-kynurenine. Catalyzes the oxidative cleavage of the indole moiety. This Cupriavidus necator (strain ATCC 17699 / DSM 428 / KCTC 22496 / NCIMB 10442 / H16 / Stanier 337) (Ralstonia eutropha) protein is Tryptophan 2,3-dioxygenase.